The following is a 177-amino-acid chain: 3-hydroxydecanoyl-[acyl-carrier-protein] dehydratase (177 aa).

The active site involves His76.

This sequence belongs to the thioester dehydratase family. FabA subfamily. As to quaternary structure, homodimer.

It is found in the cytoplasm. It carries out the reaction a (3R)-hydroxyacyl-[ACP] = a (2E)-enoyl-[ACP] + H2O. The catalysed reaction is (3R)-hydroxydecanoyl-[ACP] = (2E)-decenoyl-[ACP] + H2O. It catalyses the reaction (2E)-decenoyl-[ACP] = (3Z)-decenoyl-[ACP]. The protein operates within lipid metabolism; fatty acid biosynthesis. In terms of biological role, necessary for the introduction of cis unsaturation into fatty acids. Catalyzes the dehydration of (3R)-3-hydroxydecanoyl-ACP to E-(2)-decenoyl-ACP and then its isomerization to Z-(3)-decenoyl-ACP. Can catalyze the dehydratase reaction for beta-hydroxyacyl-ACPs with saturated chain lengths up to 16:0, being most active on intermediate chain length. The sequence is that of 3-hydroxydecanoyl-[acyl-carrier-protein] dehydratase from Mannheimia succiniciproducens (strain KCTC 0769BP / MBEL55E).